A 353-amino-acid polypeptide reads, in one-letter code: Putrescine N-methyltransferase 2 (353 aa).

Residues 15 to 50 (KSGAIPMNGHHNGTSKHQNGHKNGTSEQQNGTISLD) are disordered. Residues 25–50 (HNGTSKHQNGHKNGTSEQQNGTISLD) are compositionally biased toward polar residues. The PABS domain maps to 64 to 301 (PGWFSEFSAL…GVIGYMLCST (238 aa)). S-adenosyl-L-methionine contacts are provided by residues Gln95, Glu170, and 201 to 202 (DG). Asp220 functions as the Proton acceptor in the catalytic mechanism. Tyr289 is an S-adenosyl-L-methionine binding site.

Belongs to the class I-like SAM-binding methyltransferase superfamily. Putrescine methyltransferase family. As to expression, predominantly expressed in roots.

It catalyses the reaction putrescine + S-adenosyl-L-methionine = N-methylputrescine + S-adenosyl-L-homocysteine + H(+). Its pathway is alkaloid biosynthesis; nicotine biosynthesis. In terms of biological role, involved in the biosynthesis of pyridine alkaloid natural products, leading mainly to the production of anabasine, anatabine, nicotine and nornicotine, effective deterrents against herbivores with antiparasitic and pesticide properties (neurotoxins); nornicotine serves as the precursor in the synthesis of the carcinogen compound N'-nitrosonornicotine (NNN). Methyltransferase that mediates the conversion of putrescine to N-methylputrescine. Promotes leaves ripening. The polypeptide is Putrescine N-methyltransferase 2 (Nicotiana tabacum (Common tobacco)).